The sequence spans 917 residues: DNA topoisomerase 1 beta (917 aa).

Residues 1–368 (MATEAFVKPV…SLPSGDGQKK (368 aa)) are disordered. Over residues 32–63 (RNSNTAATTNRPSPINNAMRNSAIGSTKSSPP) the composition is skewed to polar residues. A compositionally biased stretch (low complexity) spans 66–82 (SPLTSPNRSASSSTRSS). Positions 89–100 (PSSSSVQRSTLK) are enriched in polar residues. Composition is skewed to basic and acidic residues over residues 102-116 (PLRD…ERNG) and 134-149 (DKPL…KEVT). Positions 150–170 (KQPSSSGRGSTQQAVQKSNMR) are enriched in polar residues. The span at 177 to 187 (YTKKKVLDERA) shows a compositional bias: basic and acidic residues. Residues 189-205 (MSSTVQTKTSVGTSSSK) are compositionally biased toward polar residues. Composition is skewed to basic and acidic residues over residues 256–265 (KLSEPARPVK) and 296–307 (VKEDNSDGDDHV). Phosphoserine is present on Ser301. Low complexity predominate over residues 316–338 (DSSNNKSSSAKPSSSKMIASSSR). Interaction with DNA regions lie at residues 575–576 (KY), 638–643 (RAGNEK), and 729–731 (TAK). Residues 582 to 912 (SSSLKGQSDK…MDVDPEFRFC (331 aa)) enclose the Topo IB-type catalytic domain. Residues 779–858 (VSKSHGAQVE…ERDMQTKEDM (80 aa)) adopt a coiled-coil conformation. Residue Tyr870 is the O-(3'-phospho-DNA)-tyrosine intermediate of the active site.

It belongs to the type IB topoisomerase family.

It is found in the nucleus. It carries out the reaction ATP-independent breakage of single-stranded DNA, followed by passage and rejoining.. In terms of biological role, releases the supercoiling and torsional tension of DNA introduced during the DNA replication and transcription by transiently cleaving and rejoining one strand of the DNA duplex. Introduces a single-strand break via transesterification at a target site in duplex DNA. The scissile phosphodiester is attacked by the catalytic tyrosine of the enzyme, resulting in the formation of a DNA-(3'-phosphotyrosyl)-enzyme intermediate and the expulsion of a 5'-OH DNA strand. The free DNA strand then rotates around the intact phosphodiester bond on the opposing strand, thus removing DNA supercoils. Finally, in the religation step, the DNA 5'-OH attacks the covalent intermediate to expel the active-site tyrosine and restore the DNA phosphodiester backbone. Topoisomerases 1 enzymes (TOP1A and TOP1B) are essential for plant survival. In Arabidopsis thaliana (Mouse-ear cress), this protein is DNA topoisomerase 1 beta.